Here is a 111-residue protein sequence, read N- to C-terminus: Probable 4-amino-4-deoxy-L-arabinose-phosphoundecaprenol flippase subunit ArnE (111 aa).

Over 1–35 (MIWLTLVFASLLSVAGQLCQKQATCFATVNKRRKH) the chain is Cytoplasmic. A helical membrane pass occupies residues 36–56 (IVLWLGLALACLGLAMVLWLL). The region spanning 40–109 (LGLALACLGL…IIGGIVILGS (70 aa)) is the EamA domain. Topologically, residues 57 to 60 (VLQN) are periplasmic. The chain crosses the membrane as a helical span at residues 61-81 (VPVGIAYPMLSLNFVWVTLAA). Residues 82 to 87 (VKLWHE) are Cytoplasmic-facing. Residues 88–108 (PVSLRHWCGVAFIIGGIVILG) form a helical membrane-spanning segment. The Periplasmic portion of the chain corresponds to 109-111 (STV).

The protein belongs to the ArnE family. In terms of assembly, heterodimer of ArnE and ArnF.

It localises to the cell inner membrane. Its pathway is bacterial outer membrane biogenesis; lipopolysaccharide biosynthesis. Functionally, translocates 4-amino-4-deoxy-L-arabinose-phosphoundecaprenol (alpha-L-Ara4N-phosphoundecaprenol) from the cytoplasmic to the periplasmic side of the inner membrane. This chain is Probable 4-amino-4-deoxy-L-arabinose-phosphoundecaprenol flippase subunit ArnE, found in Escherichia coli O6:H1 (strain CFT073 / ATCC 700928 / UPEC).